We begin with the raw amino-acid sequence, 171 residues long: Cytochrome c oxidase subunit 4 isoform 2, mitochondrial (171 aa).

The N-terminal 28 residues, 1–28 (MLPRAAWSLVLRKGGGGRRGMHSSEGTT), are a transit peptide targeting the mitochondrion. Residues 13 to 32 (KGGGGRRGMHSSEGTTRGGG) form a disordered region. Residues 29–100 (RGGGKMSPYT…TFAEMNRRSN (72 aa)) lie on the Mitochondrial matrix side of the membrane. A helical transmembrane segment spans residues 101-126 (EWKTVMGCVFFFIGFAALVIWWQRVY). Over 127–171 (VFPPKPITLTDERKAQQLQRMLDMKVNPVQGLASRWDYEKKQWKK) the chain is Mitochondrial intermembrane.

This sequence belongs to the cytochrome c oxidase IV family. As to quaternary structure, component of the cytochrome c oxidase (complex IV, CIV), a multisubunit enzyme composed of 14 subunits. The complex is composed of a catalytic core of 3 subunits MT-CO1, MT-CO2 and MT-CO3, encoded in the mitochondrial DNA, and 11 supernumerary subunits COX4I1 (or COX4I2), COX5A, COX5B, COX6A1 (or COX6A2), COX6B1 (or COX6B2), COX6C, COX7A2 (or COX7A1), COX7B, COX7C, COX8A and NDUFA4, which are encoded in the nuclear genome. The complex exists as a monomer or a dimer and forms supercomplexes (SCs) in the inner mitochondrial membrane with NADH-ubiquinone oxidoreductase (complex I, CI) and ubiquinol-cytochrome c oxidoreductase (cytochrome b-c1 complex, complex III, CIII), resulting in different assemblies (supercomplex SCI(1)III(2)IV(1) and megacomplex MCI(2)III(2)IV(2)). Highly expressed in lung.

The protein resides in the mitochondrion inner membrane. The protein operates within energy metabolism; oxidative phosphorylation. Functionally, component of the cytochrome c oxidase, the last enzyme in the mitochondrial electron transport chain which drives oxidative phosphorylation. The respiratory chain contains 3 multisubunit complexes succinate dehydrogenase (complex II, CII), ubiquinol-cytochrome c oxidoreductase (cytochrome b-c1 complex, complex III, CIII) and cytochrome c oxidase (complex IV, CIV), that cooperate to transfer electrons derived from NADH and succinate to molecular oxygen, creating an electrochemical gradient over the inner membrane that drives transmembrane transport and the ATP synthase. Cytochrome c oxidase is the component of the respiratory chain that catalyzes the reduction of oxygen to water. Electrons originating from reduced cytochrome c in the intermembrane space (IMS) are transferred via the dinuclear copper A center (CU(A)) of subunit 2 and heme A of subunit 1 to the active site in subunit 1, a binuclear center (BNC) formed by heme A3 and copper B (CU(B)). The BNC reduces molecular oxygen to 2 water molecules using 4 electrons from cytochrome c in the IMS and 4 protons from the mitochondrial matrix. The protein is Cytochrome c oxidase subunit 4 isoform 2, mitochondrial of Homo sapiens (Human).